A 204-amino-acid chain; its full sequence is Carbon disulfide hydrolase (204 aa).

Positions 35, 88, and 91 each coordinate Zn(2+).

It belongs to the beta-class carbonic anhydrase family. Forms a hexadecameric catenane homooligomer, through interactions of two interlocked octameric rings. Exists as both octamers and hexadecamers in solution. Requires Zn(2+) as cofactor.

It carries out the reaction carbon disulfide + 2 H2O = 2 hydrogen sulfide + CO2 + 2 H(+). The protein operates within sulfur metabolism; hydrogen sulfide biosynthesis. Its function is as follows. Catalyzes the conversion of carbon disulfide into hydrogen sulfide and carbon dioxide, with carbonyl sulfide as an intermediate. Likely plays a key role in sulfur metabolism that allows Acidianus sp. A1-3 to grow on carbon disulfide as the main carbon and energy source. Does not show carbonic anhydrase activity (hydration of CO(2) to carbonate). This Acidianus sp. (strain A1-3) protein is Carbon disulfide hydrolase.